The following is a 110-amino-acid chain: Large ribosomal subunit protein uL22 (110 aa).

Belongs to the universal ribosomal protein uL22 family. As to quaternary structure, part of the 50S ribosomal subunit.

In terms of biological role, this protein binds specifically to 23S rRNA; its binding is stimulated by other ribosomal proteins, e.g. L4, L17, and L20. It is important during the early stages of 50S assembly. It makes multiple contacts with different domains of the 23S rRNA in the assembled 50S subunit and ribosome. Its function is as follows. The globular domain of the protein is located near the polypeptide exit tunnel on the outside of the subunit, while an extended beta-hairpin is found that lines the wall of the exit tunnel in the center of the 70S ribosome. In Delftia acidovorans (strain DSM 14801 / SPH-1), this protein is Large ribosomal subunit protein uL22.